We begin with the raw amino-acid sequence, 177 residues long: MADNTVILDGSGVKRALTRIAHEVLEKNKGVEGLVLVGIRTGGVFLAQELAERLVEIEGVEVPCGAVDITMYRDDIKGHTEHLPVGKTELPFSIEGKKVVLVDDVLFTGRTIRAALDALMDQGRPSSIQLAVLVDRGHRDLPIRADFVGRNVPTSRSENIVVAFDADNKPTEVILQK.

Positions 99–111 (VVLVDDVLFTGRT) match the PRPP-binding motif.

Belongs to the purine/pyrimidine phosphoribosyltransferase family. PyrR subfamily.

It catalyses the reaction UMP + diphosphate = 5-phospho-alpha-D-ribose 1-diphosphate + uracil. Regulates the transcription of the pyrimidine nucleotide (pyr) operon in response to exogenous pyrimidines. Its function is as follows. Also displays a weak uracil phosphoribosyltransferase activity which is not physiologically significant. This chain is Bifunctional protein PyrR, found in Geobacter sp. (strain M21).